A 462-amino-acid chain; its full sequence is Nuclear factor interleukin-3-regulated protein (462 aa).

Lys24 participates in a covalent cross-link: Glycyl lysine isopeptide (Lys-Gly) (interchain with G-Cter in SUMO2). The region spanning 73-136 is the bZIP domain; it reads DAMYWEKRRK…GLISSTAYAQ (64 aa). The tract at residues 79–95 is basic motif; the sequence is KRRKNNEAAKRSREKRR. The interval 99-106 is leucine-zipper; sequence LVLENKLI. Disordered regions lie at residues 189-236 and 254-303; these read DVSE…RDDR and GYSH…HSPV. Lys214 participates in a covalent cross-link: Glycyl lysine isopeptide (Lys-Gly) (interchain with G-Cter in SUMO2). Lys219 participates in a covalent cross-link: Glycyl lysine isopeptide (Lys-Gly) (interchain with G-Cter in SUMO1); alternate. Lys219 is covalently cross-linked (Glycyl lysine isopeptide (Lys-Gly) (interchain with G-Cter in SUMO2); alternate). The segment covering 227–236 has biased composition (basic and acidic residues); the sequence is SYAREPRDDR. The segment covering 264-274 has biased composition (polar residues); sequence VNRSSSNSPRT. Ser301 carries the post-translational modification Phosphoserine. Glycyl lysine isopeptide (Lys-Gly) (interchain with G-Cter in SUMO2) cross-links involve residues Lys314, Lys326, Lys332, Lys337, and Lys350. A Phosphoserine modification is found at Ser353. Residues Lys360, Lys394, Lys401, Lys406, Lys412, Lys419, Lys424, Lys434, and Lys448 each participate in a glycyl lysine isopeptide (Lys-Gly) (interchain with G-Cter in SUMO2) cross-link.

It belongs to the bZIP family. NFIL3 subfamily. Homodimer. Binds DNA as a dimer. Interacts with CRY2, DR1 and PER2. Interacts with NR0B2. Interacts with MYSM1.

The protein resides in the nucleus. Acts as a transcriptional regulator that recognizes and binds to the sequence 5'-[GA]TTA[CT]GTAA[CT]-3', a sequence present in many cellular and viral promoters. Represses transcription from promoters with activating transcription factor (ATF) sites. Represses promoter activity in osteoblasts. Represses transcriptional activity of PER1. Represses transcriptional activity of PER2 via the B-site on the promoter. Activates transcription from the interleukin-3 promoter in T-cells. Competes for the same consensus-binding site with PAR DNA-binding factors (DBP, HLF and TEF). Component of the circadian clock that acts as a negative regulator for the circadian expression of PER2 oscillation in the cell-autonomous core clock. Protects pro-B cells from programmed cell death. Represses the transcription of CYP2A5. Positively regulates the expression and activity of CES2 by antagonizing the repressive action of NR1D1 on CES2. Required for the development of natural killer cell precursors. In Bos taurus (Bovine), this protein is Nuclear factor interleukin-3-regulated protein (NFIL3).